The following is a 240-amino-acid chain: Probable Ni/Fe-hydrogenase B-type cytochrome subunit (240 aa).

Transmembrane regions (helical) follow at residues 31 to 51, 75 to 95, 142 to 163, and 196 to 213; these read LWHWVTALSIVVLGVTGYFIG, FAAGYVLAIGFLGRVYWAFVG, LAMFCFFVVGAVFMSVTGFALY, and LGMWYLVVFVMVHVYLAV.

Belongs to the HupC/HyaC/HydC family.

Its subcellular location is the cell membrane. Its function is as follows. Probable b-type cytochrome. In Azotobacter vinelandii, this protein is Probable Ni/Fe-hydrogenase B-type cytochrome subunit (hoxZ).